Reading from the N-terminus, the 332-residue chain is Ribosomal RNA small subunit methyltransferase H (332 aa).

S-adenosyl-L-methionine contacts are provided by residues 36–38, Asp-54, Phe-81, Asp-102, and Gln-109; that span reads GGY. The interval 295–322 is disordered; it reads PRARSAKLRGAERTESPAHAAGDLPGWP.

This sequence belongs to the methyltransferase superfamily. RsmH family.

It is found in the cytoplasm. The catalysed reaction is cytidine(1402) in 16S rRNA + S-adenosyl-L-methionine = N(4)-methylcytidine(1402) in 16S rRNA + S-adenosyl-L-homocysteine + H(+). Functionally, specifically methylates the N4 position of cytidine in position 1402 (C1402) of 16S rRNA. The protein is Ribosomal RNA small subunit methyltransferase H of Rhodopseudomonas palustris (strain ATCC BAA-98 / CGA009).